A 638-amino-acid polypeptide reads, in one-letter code: Pentatricopeptide repeat-containing protein At1g59720, chloroplastic/mitochondrial (638 aa).

The transit peptide at 1-40 (MVVRSIIVSPPTTITYYHPMSIGLLVHPLSPHIPPASSPS) directs the protein to the chloroplast and mitochondrion. PPR repeat units lie at residues 82–112 (TLFLYGKILQLSSSFSDVNYAFRVFDSIENH), 113–148 (SSFMWNTLIRACAHDVSRKEEAFMLYRKMLERGESS), 150–184 (DKHTFPFVLKACAYIFGFSEGKQVHCQIVKHGFGG), 185–215 (DVYVNNGLIHLYGSCGCLDLARKVFDEMPER), 216–246 (SLVSWNSMIDALVRFGEYDSALQLFREMQRS), 250–280 (DGYTMQSVLSACAGLGSLSLGTWAHAFLLRK), 288–318 (DVLVKNSLIEMYCKCGSLRMAEQVFQGMQKR), 319–353 (DLASWNAMILGFATHGRAEEAMNFFDRMVDKRENV), 356–390 (NSVTFVGLLIACNHRGFVNKGRQYFDMMVRDYCIE), and 392–422 (ALEHYGCIVDLIARAGYITEAIDMVMSMPMK). Residues 427 to 510 (IWRSLLDACC…EPGCSSIEIN (84 aa)) are type E motif. Positions 511–541 (GISHEFFAGDTSHPQTKQIYQQLKVIDDRLR) are type E(+) motif. The type DYW motif stretch occupies residues 542–638 (SIGYLPDRSQ…DGSCSCLDYW (97 aa)).

It belongs to the PPR family. PCMP-H subfamily. Interacts with ORRM1. Interacts with VAR3/OZ1.

The protein resides in the plastid. It localises to the chloroplast. It is found in the mitochondrion. Functionally, involved in multiple sites RNA editing events in chloroplasts. Involved in the editing of the site 2 of ndhB (ndhB-2) and site 3 of ndhD (ndhD-3) transcripts, which are two plastid-encoded subunits of the chloroplast NAD(P)H dehydrogenase (NDH) complex. Required for the activity of the NDH complex of the photosynthetic electron transport chain. This is Pentatricopeptide repeat-containing protein At1g59720, chloroplastic/mitochondrial (PCMP-H51) from Arabidopsis thaliana (Mouse-ear cress).